A 148-amino-acid chain; its full sequence is Deoxyuridine 5'-triphosphate nucleotidohydrolase (148 aa).

Substrate-binding positions include 68 to 70 (RSG), asparagine 81, 85 to 87 (TID), and lysine 95.

Belongs to the dUTPase family. Mg(2+) is required as a cofactor.

The enzyme catalyses dUTP + H2O = dUMP + diphosphate + H(+). Its pathway is pyrimidine metabolism; dUMP biosynthesis; dUMP from dCTP (dUTP route): step 2/2. Functionally, this enzyme is involved in nucleotide metabolism: it produces dUMP, the immediate precursor of thymidine nucleotides and it decreases the intracellular concentration of dUTP so that uracil cannot be incorporated into DNA. The chain is Deoxyuridine 5'-triphosphate nucleotidohydrolase from Rickettsia prowazekii (strain Madrid E).